The chain runs to 273 residues: Putative phosphoenolpyruvate synthase regulatory protein (273 aa).

Residue 153-160 (GVSRSGKT) coordinates ADP.

Belongs to the pyruvate, phosphate/water dikinase regulatory protein family. PSRP subfamily.

The catalysed reaction is [pyruvate, water dikinase] + ADP = [pyruvate, water dikinase]-phosphate + AMP + H(+). It carries out the reaction [pyruvate, water dikinase]-phosphate + phosphate + H(+) = [pyruvate, water dikinase] + diphosphate. In terms of biological role, bifunctional serine/threonine kinase and phosphorylase involved in the regulation of the phosphoenolpyruvate synthase (PEPS) by catalyzing its phosphorylation/dephosphorylation. This chain is Putative phosphoenolpyruvate synthase regulatory protein, found in Paracidovorax citrulli (strain AAC00-1) (Acidovorax citrulli).